The sequence spans 206 residues: Small ribosomal subunit protein uS4 (206 aa).

The disordered stretch occupies residues 18–46; the sequence is NIWGRPKSPVNRREYGPGQHGQRRKGKLS. Positions 94-156 constitute an S4 RNA-binding domain; sequence RRLDAVVYRA…SKQNVAVLEA (63 aa).

It belongs to the universal ribosomal protein uS4 family. As to quaternary structure, part of the 30S ribosomal subunit. Contacts protein S5. The interaction surface between S4 and S5 is involved in control of translational fidelity.

Its function is as follows. One of the primary rRNA binding proteins, it binds directly to 16S rRNA where it nucleates assembly of the body of the 30S subunit. In terms of biological role, with S5 and S12 plays an important role in translational accuracy. The sequence is that of Small ribosomal subunit protein uS4 from Ruegeria sp. (strain TM1040) (Silicibacter sp.).